A 357-amino-acid polypeptide reads, in one-letter code: Peptide chain release factor 1 (357 aa).

Gln234 bears the N5-methylglutamine mark.

The protein belongs to the prokaryotic/mitochondrial release factor family. Methylated by PrmC. Methylation increases the termination efficiency of RF1.

It localises to the cytoplasm. Peptide chain release factor 1 directs the termination of translation in response to the peptide chain termination codons UAG and UAA. The chain is Peptide chain release factor 1 (prfA) from Lactococcus lactis subsp. lactis (strain IL1403) (Streptococcus lactis).